The chain runs to 612 residues: Breast cancer type 1 susceptibility protein homolog (612 aa).

The RING-type zinc-finger motif lies at 21 to 61 (CGICCSTYKDPILSTCFHIFCRSCINACFERKRKVQCPICR). The segment at 140–173 (RRKRPSRPQPPSAFAEEPAEPVEPPEPATKQPVE) is disordered. 2 consecutive BRCT domains span residues 415-477 (RFAE…DYTI) and 505-603 (EHGK…PYKA).

As to quaternary structure, heterodimer (via RING-type zinc finger) with brd-1 to form the core CeBCD complex. Brc-1-brd-1 heterodimer-containing CeBCD complexes bound to chromatin are activated as an E3-ubiquitin ligase in response to DNA damage. The heterodimer interacts with the recombinase rad-51 following ionizing irradiation; the interaction is direct. The heterodimer interacts the E2-ubiquitin-conjugating enzyme let-70 following ionizing irradiation. The heterodimer interacts with the pro-crossover proteins msh-5 and syp-3. Phosphorylation of CeBCD complexes is required for E3 ubiquitin-protein ligase activity.

It localises to the nucleus. The protein resides in the chromosome. Its subcellular location is the cytoplasm. It carries out the reaction S-ubiquitinyl-[E2 ubiquitin-conjugating enzyme]-L-cysteine + [acceptor protein]-L-lysine = [E2 ubiquitin-conjugating enzyme]-L-cysteine + N(6)-ubiquitinyl-[acceptor protein]-L-lysine.. It participates in protein modification; protein ubiquitination. E3 ubiquitin-protein ligase activity of CeBCD complexes occurs at DNA damage sites. Following DNA damage, E3 ubiquitin-protein ligase activity is reduced by caffeine treatment (inhibitor of ATM and ATK kinase activity). Its function is as follows. E3 ubiquitin-protein ligase that specifically mediates the formation of polyubiquitin chains and plays a central role in DNA repair. Plays a role in triggering cellular responses at damage sites in response to DNA damage that may be induced by UV and ionizing radiation for example. Functions in double-strand break repair, and is required for homologous recombination between sister chromatids in meiotic and mitotic cells. In particular, protects against chromosome non-disjunction and nuclear fragmentation during meiotic double-strand break repair to ensure sister chromatid recombination and aid chromosome stability. Required for normal cell cycle progression. Along with brap-2 modulates the expression of cell cycle arrest protein cki-1 in response to increased levels of reactive oxygen species. Constituent of the CeBCD complex that possesses E3 ubiquitin-protein ligase activity. When bound to chromatin, the brc-1-brd-1 heterodimer within the CeBCD complex is inactive during normal conditions, but in response to DNA damage, the brc-1-brd-1 heterodimer associates with other proteins such as the recombinase rad-51 or the E2-ubiquitin-conjugating enzyme let-70, which activate the CeBCD complex as an E3-ubiquitin ligase. Moreover, association between the brc-1-brd-1 heterodimer and rad-51 and let-70, probably requires DNA checkpoint proteins such as atl-1 and mre-11 in order to induce ubiquitination at DNA damage sites. To this end, the brc-1-brd-1 heterodimer coordinates a diverse range of cellular pathways such as DNA damage repair, ubiquitination and transcriptional regulation to maintain genomic stability. The sequence is that of Breast cancer type 1 susceptibility protein homolog from Caenorhabditis elegans.